Consider the following 199-residue polypeptide: Protein-methionine-sulfoxide reductase heme-binding subunit MsrQ (199 aa).

The next 4 membrane-spanning stretches (helical) occupy residues 10 to 30 (WLKVCLHLAGFLPLLWLFWAI), 82 to 102 (LWCFVWATLHLTSYALLELGI), 116 to 136 (PYLTLGIISWLVLLALTLTST), and 153 to 173 (VVYLVAILAPIHYLWSVKILS).

It belongs to the MsrQ family. Heterodimer of a catalytic subunit (MsrP) and a heme-binding subunit (MsrQ). It depends on FMN as a cofactor. Requires heme b as cofactor.

It localises to the cell inner membrane. In terms of biological role, part of the MsrPQ system that repairs oxidized periplasmic proteins containing methionine sulfoxide residues (Met-O), using respiratory chain electrons. Thus protects these proteins from oxidative-stress damage caused by reactive species of oxygen and chlorine generated by the host defense mechanisms. MsrPQ is essential for the maintenance of envelope integrity under bleach stress, rescuing a wide series of structurally unrelated periplasmic proteins from methionine oxidation, including the primary periplasmic chaperone SurA and the lipoprotein Pal. MsrQ provides electrons for reduction to the reductase catalytic subunit MsrP, using the quinone pool of the respiratory chain. This is Protein-methionine-sulfoxide reductase heme-binding subunit MsrQ from Salmonella newport (strain SL254).